A 208-amino-acid chain; its full sequence is Uracil phosphoribosyltransferase (208 aa).

5-phospho-alpha-D-ribose 1-diphosphate-binding positions include arginine 78, arginine 103, and 130–138 (DPMLATGGS). Uracil-binding positions include isoleucine 193 and 198–200 (GDA). Aspartate 199 contributes to the 5-phospho-alpha-D-ribose 1-diphosphate binding site.

The protein belongs to the UPRTase family. The cofactor is Mg(2+).

The catalysed reaction is UMP + diphosphate = 5-phospho-alpha-D-ribose 1-diphosphate + uracil. It functions in the pathway pyrimidine metabolism; UMP biosynthesis via salvage pathway; UMP from uracil: step 1/1. With respect to regulation, allosterically activated by GTP. Its function is as follows. Catalyzes the conversion of uracil and 5-phospho-alpha-D-ribose 1-diphosphate (PRPP) to UMP and diphosphate. The polypeptide is Uracil phosphoribosyltransferase (Blochmanniella pennsylvanica (strain BPEN)).